The primary structure comprises 69 residues: Conotoxin Eb6.14 (69 aa).

The signal sequence occupies residues 1-17 (VLIIAVLFLTACQLTTA). The propeptide occupies 18 to 41 (ETYSRGRQKHRARRSTDKNSKWTR). Cystine bridges form between cysteine 43–cysteine 57, cysteine 50–cysteine 61, and cysteine 56–cysteine 68.

This sequence belongs to the conotoxin O1 superfamily. Expressed by the venom duct.

Its subcellular location is the secreted. The protein is Conotoxin Eb6.14 (E1) of Conus ebraeus (Hebrew cone).